Here is a 574-residue protein sequence, read N- to C-terminus: Serine hydroxymethyltransferase (574 aa).

Position 180–182 (180–182) interacts with (6S)-5,6,7,8-tetrahydrofolate; sequence GHL. Position 288 is an N6-(pyridoxal phosphate)lysine (Lys288). Glu306 is a binding site for (6S)-5,6,7,8-tetrahydrofolate.

It belongs to the SHMT family. In terms of assembly, homodimer. The cofactor is pyridoxal 5'-phosphate.

Its subcellular location is the cytoplasm. The catalysed reaction is (6R)-5,10-methylene-5,6,7,8-tetrahydrofolate + glycine + H2O = (6S)-5,6,7,8-tetrahydrofolate + L-serine. Its pathway is one-carbon metabolism; tetrahydrofolate interconversion. It functions in the pathway amino-acid biosynthesis; glycine biosynthesis; glycine from L-serine: step 1/1. Catalyzes the reversible interconversion of serine and glycine with tetrahydrofolate (THF) serving as the one-carbon carrier. This reaction serves as the major source of one-carbon groups required for the biosynthesis of purines, thymidylate, methionine, and other important biomolecules. Also exhibits THF-independent aldolase activity toward beta-hydroxyamino acids, producing glycine and aldehydes, via a retro-aldol mechanism. This chain is Serine hydroxymethyltransferase, found in Treponema pallidum (strain Nichols).